A 167-amino-acid polypeptide reads, in one-letter code: Translation initiation factor IF-3 (167 aa).

This sequence belongs to the IF-3 family. In terms of assembly, monomer.

It localises to the cytoplasm. Its function is as follows. IF-3 binds to the 30S ribosomal subunit and shifts the equilibrium between 70S ribosomes and their 50S and 30S subunits in favor of the free subunits, thus enhancing the availability of 30S subunits on which protein synthesis initiation begins. The sequence is that of Translation initiation factor IF-3 from Bacillus cereus (strain ATCC 14579 / DSM 31 / CCUG 7414 / JCM 2152 / NBRC 15305 / NCIMB 9373 / NCTC 2599 / NRRL B-3711).